Here is a 532-residue protein sequence, read N- to C-terminus: Protein DETOXIFICATION 51 (532 aa).

Transmembrane regions (helical) follow at residues 65–85 (FPIAVTALVLYLRSAVSMFFL), 98–118 (LAIAFANITGYSVLSGLALGM), 142–162 (VVFLLVCCVPISVLWFNVGKI), 176–196 (AQTYLIFSLPDLLTNTLLHPI), 208–228 (PVTLASLSGAVFHLPANLFLV), 238–258 (VAVASSITNIFVVAFLVCYVW), 290–310 (VSVCLEWWWYEIMIVLCGLLV), 316–336 (VAAMGVLIQTTSFLYVFPSSL), 358–378 (LTATVAIVFAAVTGIIAAAFA), 395–415 (ILQLTAAALPILGLCEIGNCP), 439–459 (AFYLVGMPVAVGLGFWAGIGF), and 461–481 (GLWVGLLAAQISCAGLMMYVV).

The protein belongs to the multi antimicrobial extrusion (MATE) (TC 2.A.66.1) family. In terms of tissue distribution, expressed in the meristematic regions. Mainly detected in tissues where cells were actively dividing, such as leaf primordia and young leaves, the junction between lateral root and the primary root, root cap, hydathodes, the junction between secondary inflorescence and the main inflorescence, young stamen and young siliques. Highly expressed at the junction between the hypocotyl and the root, and at the marginal areas of cotyledons and true leaves, coinciding with the locations of the hydathode. Also highly expressed at the basal regions of the newly emerged lateral roots. In the floral organs, mostly expressed at the style of the pistil.

It localises to the endosome membrane. The protein localises to the late endosome membrane. Its function is as follows. Functions as a multidrug and toxin extrusion transporter that negatively regulates plant disease resistance. Plays an important role in maintaining normal plant architecture, possibly by regulating local auxin biosynthesis. May act as a negative regulator of hypocotyl cell elongation in the light. In Arabidopsis thaliana (Mouse-ear cress), this protein is Protein DETOXIFICATION 51.